A 229-amino-acid chain; its full sequence is Flagellar L-ring protein (229 aa).

Residues 1–25 (MKQVRLPSSATVRAACAVAVAALAG) form the signal peptide. A lipid anchor (N-palmitoyl cysteine) is attached at cysteine 26. Residue cysteine 26 is the site of S-diacylglycerol cysteine attachment.

The protein belongs to the FlgH family. In terms of assembly, the basal body constitutes a major portion of the flagellar organelle and consists of four rings (L,P,S, and M) mounted on a central rod.

It localises to the cell outer membrane. The protein localises to the bacterial flagellum basal body. In terms of biological role, assembles around the rod to form the L-ring and probably protects the motor/basal body from shearing forces during rotation. The polypeptide is Flagellar L-ring protein (Burkholderia cenocepacia (strain ATCC BAA-245 / DSM 16553 / LMG 16656 / NCTC 13227 / J2315 / CF5610) (Burkholderia cepacia (strain J2315))).